The sequence spans 270 residues: 5'-AMP-activated protein kinase subunit beta-1 (270 aa).

The interval 1-44 is disordered; sequence MGNTSSERAALERQAGHKTPRRDSSGGAKDGDRPKILMDSPEDA. Residue Gly2 is the site of N-myristoyl glycine attachment. Thr4 carries the post-translational modification Phosphothreonine. Residues Ser5 and Ser6 each carry the phosphoserine modification. Residues 9-36 are compositionally biased toward basic and acidic residues; it reads AALERQAGHKTPRRDSSGGAKDGDRPKI. Position 19 is a phosphothreonine (Thr19). Phosphoserine; by autocatalysis occurs at positions 24 and 25. Residues Ser40, Ser96, and Ser101 each carry the phosphoserine modification. The interval 68–163 is glycogen-binding domain; it reads EANDKAPAQA…QVKKTDFEVF (96 aa). The residue at position 108 (Ser108) is a Phosphoserine; by autocatalysis. Thr148 bears the Phosphothreonine mark. Residue Ser182 is modified to Phosphoserine. Lys201 is modified (N6-succinyllysine).

It belongs to the 5'-AMP-activated protein kinase beta subunit family. As to quaternary structure, AMPK is a heterotrimer of an alpha catalytic subunit (PRKAA1 or PRKAA2), a beta (PRKAB1 or PRKAB2) and a gamma non-catalytic subunits (PRKAG1, PRKAG2 or PRKAG3). Interacts with FNIP1 and FNIP2. Post-translationally, phosphorylated when associated with the catalytic subunit (PRKAA1 or PRKAA2). Phosphorylated by ULK1; leading to negatively regulate AMPK activity and suggesting the existence of a regulatory feedback loop between ULK1 and AMPK.

Non-catalytic subunit of AMP-activated protein kinase (AMPK), an energy sensor protein kinase that plays a key role in regulating cellular energy metabolism. In response to reduction of intracellular ATP levels, AMPK activates energy-producing pathways and inhibits energy-consuming processes: inhibits protein, carbohydrate and lipid biosynthesis, as well as cell growth and proliferation. AMPK acts via direct phosphorylation of metabolic enzymes, and by longer-term effects via phosphorylation of transcription regulators. Also acts as a regulator of cellular polarity by remodeling the actin cytoskeleton; probably by indirectly activating myosin. Beta non-catalytic subunit acts as a scaffold on which the AMPK complex assembles, via its C-terminus that bridges alpha (PRKAA1 or PRKAA2) and gamma subunits (PRKAG1, PRKAG2 or PRKAG3). The polypeptide is 5'-AMP-activated protein kinase subunit beta-1 (Prkab1) (Mus musculus (Mouse)).